We begin with the raw amino-acid sequence, 397 residues long: Riboflavin biosynthesis protein RibBA (397 aa).

Positions 1–199 (MFHRIEEALE…IEDLIAYRRH (199 aa)) are DHBP synthase. Residues 26–27 (RE), Asp31, 138–142 (RAGHT), and Glu162 contribute to the D-ribulose 5-phosphate site. A Mg(2+)-binding site is contributed by Glu27. His141 lines the Mg(2+) pocket. The tract at residues 200 to 397 (HETLVTREAE…VNKLGHLLNL (198 aa)) is GTP cyclohydrolase II. GTP is bound at residue 250–254 (RVHSE). Zn(2+) contacts are provided by Cys255, Cys266, and Cys268. GTP is bound by residues Gln271, 293 to 295 (EGR), and Thr315. Residue Asp327 is the Proton acceptor; for GTP cyclohydrolase activity of the active site. Arg329 functions as the Nucleophile; for GTP cyclohydrolase activity in the catalytic mechanism. The GTP site is built by Thr350 and Lys355.

The protein in the N-terminal section; belongs to the DHBP synthase family. This sequence in the C-terminal section; belongs to the GTP cyclohydrolase II family. Mg(2+) serves as cofactor. The cofactor is Mn(2+). Requires Zn(2+) as cofactor.

The catalysed reaction is D-ribulose 5-phosphate = (2S)-2-hydroxy-3-oxobutyl phosphate + formate + H(+). It catalyses the reaction GTP + 4 H2O = 2,5-diamino-6-hydroxy-4-(5-phosphoribosylamino)-pyrimidine + formate + 2 phosphate + 3 H(+). The protein operates within cofactor biosynthesis; riboflavin biosynthesis; 2-hydroxy-3-oxobutyl phosphate from D-ribulose 5-phosphate: step 1/1. Its pathway is cofactor biosynthesis; riboflavin biosynthesis; 5-amino-6-(D-ribitylamino)uracil from GTP: step 1/4. Functionally, catalyzes the conversion of D-ribulose 5-phosphate to formate and 3,4-dihydroxy-2-butanone 4-phosphate. Catalyzes the conversion of GTP to 2,5-diamino-6-ribosylamino-4(3H)-pyrimidinone 5'-phosphate (DARP), formate and pyrophosphate. In Bacillus cereus (strain ATCC 14579 / DSM 31 / CCUG 7414 / JCM 2152 / NBRC 15305 / NCIMB 9373 / NCTC 2599 / NRRL B-3711), this protein is Riboflavin biosynthesis protein RibBA.